We begin with the raw amino-acid sequence, 132 residues long: D-ribose pyranase (132 aa).

The active-site Proton donor is the histidine 20. Substrate-binding positions include aspartate 28, histidine 99, and 121 to 123 (YSN).

The protein belongs to the RbsD / FucU family. RbsD subfamily. As to quaternary structure, homodecamer.

It localises to the cytoplasm. It carries out the reaction beta-D-ribopyranose = beta-D-ribofuranose. It participates in carbohydrate metabolism; D-ribose degradation; D-ribose 5-phosphate from beta-D-ribopyranose: step 1/2. Its function is as follows. Catalyzes the interconversion of beta-pyran and beta-furan forms of D-ribose. This chain is D-ribose pyranase, found in Streptococcus uberis (strain ATCC BAA-854 / 0140J).